The chain runs to 436 residues: MYDIKWIRDNSALFDQGRERRGLPKLSAELLALDDARRAAIAESQAAQERRNAASKEIGAAMKAKDNARAEALKAEMAELKAVSPALEEAERLAIAALDRALAEIPNLPLEDVPFGRDENDNPELRVVGEKPVFSFVPKEHFDIGEGLGLMDFEAAAKLSGARFVVNKGPLARLERALGQFMLDLHTGEHGYTEVNPPILARDDALFGTAQLPKLEEDMFAAHAGRVPQEAAGDLYWLIPTSEVVLTNLVRETILDEKQLPLRFTACTPCFRAEAGSAGRDTRGMIRQHQFTKTELVSITTPEEALVEHERMLTCAEEVLKRLGLAYRVVTLCTGDMGFASQKTYDIEVWLPGQGRYREISSCSVCGDFQARRMNARYRPEGGKTTRFVHTLNGSGVAVGRALVAVLENYQREDGGVNVPRALLPYMGGITTITRG.

241 to 243 (TSE) is a binding site for L-serine. 272-274 (RAE) contacts ATP. Glutamate 295 serves as a coordination point for L-serine. 359–362 (EISS) is a binding site for ATP. Serine 395 is a binding site for L-serine.

The protein belongs to the class-II aminoacyl-tRNA synthetase family. Type-1 seryl-tRNA synthetase subfamily. As to quaternary structure, homodimer. The tRNA molecule binds across the dimer.

The protein resides in the cytoplasm. It carries out the reaction tRNA(Ser) + L-serine + ATP = L-seryl-tRNA(Ser) + AMP + diphosphate + H(+). The catalysed reaction is tRNA(Sec) + L-serine + ATP = L-seryl-tRNA(Sec) + AMP + diphosphate + H(+). It functions in the pathway aminoacyl-tRNA biosynthesis; selenocysteinyl-tRNA(Sec) biosynthesis; L-seryl-tRNA(Sec) from L-serine and tRNA(Sec): step 1/1. Its function is as follows. Catalyzes the attachment of serine to tRNA(Ser). Is also able to aminoacylate tRNA(Sec) with serine, to form the misacylated tRNA L-seryl-tRNA(Sec), which will be further converted into selenocysteinyl-tRNA(Sec). This chain is Serine--tRNA ligase, found in Beijerinckia indica subsp. indica (strain ATCC 9039 / DSM 1715 / NCIMB 8712).